The following is a 328-amino-acid chain: Cysteine proteinase COT44 (328 aa).

Positions 1-99 (MSIYLRWSLE…KYSAAVNVDE (99 aa)) are cleaved as a propeptide — activation peptide. 2 N-linked (GlcNAc...) asparagine glycosylation sites follow: N48 and N60. 3 disulfides stabilise this stretch: C121-C163, C155-C196, and C254-C305. C124 is an active-site residue. Catalysis depends on residues H260 and N280.

This sequence belongs to the peptidase C1 family. Present in both cotyledons and axes.

Its function is as follows. May function in an early event in cortical cell differentiation. The protein is Cysteine proteinase COT44 of Brassica napus (Rape).